Consider the following 139-residue polypeptide: Thioredoxin-like protein Clot (139 aa).

A Thioredoxin domain is found at 1–136; that stretch reads MTVEKVDATV…LADKVDAVVN (136 aa). Catalysis depends on nucleophile residues Cys-49 and Cys-52. The cysteines at positions 49 and 52 are disulfide-linked.

The protein belongs to the thioredoxin family.

Its function is as follows. Probable thiol-disulfide oxidoreductase that may participate in various redox reactions. This is Thioredoxin-like protein Clot from Oryza sativa subsp. japonica (Rice).